The following is a 165-amino-acid chain: Large ribosomal subunit protein mL49 (165 aa).

Residues 42-75 are compositionally biased toward low complexity; that stretch reads TTATTTTPLQQQQQQQPTTQPTTPIQTQTGAAPT. Residues 42–81 are disordered; it reads TTATTTTPLQQQQQQQPTTQPTTPIQTQTGAAPTESTKPV.

The protein belongs to the mitochondrion-specific ribosomal protein mL49 family. Component of the mitochondrial large ribosomal subunit (mt-LSU). Mature N.crassa 74S mitochondrial ribosomes consist of a small (37S) and a large (54S) subunit. The 37S small subunit contains a 16S ribosomal RNA (16S mt-rRNA) and 32 different proteins. The 54S large subunit contains a 23S rRNA (23S mt-rRNA) and 42 different proteins.

The protein localises to the mitochondrion. Component of the mitochondrial ribosome (mitoribosome), a dedicated translation machinery responsible for the synthesis of mitochondrial genome-encoded proteins, including at least some of the essential transmembrane subunits of the mitochondrial respiratory chain. The mitoribosomes are attached to the mitochondrial inner membrane and translation products are cotranslationally integrated into the membrane. The sequence is that of Large ribosomal subunit protein mL49 (img2) from Neurospora crassa (strain ATCC 24698 / 74-OR23-1A / CBS 708.71 / DSM 1257 / FGSC 987).